We begin with the raw amino-acid sequence, 235 residues long: Large ribosomal subunit protein bL25 (235 aa).

Disordered regions lie at residues 1–21 (MADN…PARR) and 210–235 (APAA…GAKK). A compositionally biased stretch (low complexity) spans 210–222 (APAAGAAPAAGGE). The span at 223–235 (AAKKAPEAKGAKK) shows a compositional bias: basic and acidic residues.

It belongs to the bacterial ribosomal protein bL25 family. CTC subfamily. As to quaternary structure, part of the 50S ribosomal subunit; part of the 5S rRNA/L5/L18/L25 subcomplex. Contacts the 5S rRNA. Binds to the 5S rRNA independently of L5 and L18.

This is one of the proteins that binds to the 5S RNA in the ribosome where it forms part of the central protuberance. This is Large ribosomal subunit protein bL25 from Anaeromyxobacter sp. (strain Fw109-5).